A 447-amino-acid polypeptide reads, in one-letter code: N-succinylarginine dihydrolase (447 aa).

Substrate-binding positions include 19 to 28 (AGLSFGNEAS), Asn-110, and 137 to 138 (HR). Glu-174 is a catalytic residue. Position 212 (Arg-212) interacts with substrate. Residue His-248 is part of the active site. Substrate contacts are provided by Asp-250 and Asn-359. The active-site Nucleophile is the Cys-365.

This sequence belongs to the succinylarginine dihydrolase family. As to quaternary structure, homodimer.

It carries out the reaction N(2)-succinyl-L-arginine + 2 H2O + 2 H(+) = N(2)-succinyl-L-ornithine + 2 NH4(+) + CO2. The protein operates within amino-acid degradation; L-arginine degradation via AST pathway; L-glutamate and succinate from L-arginine: step 2/5. Functionally, catalyzes the hydrolysis of N(2)-succinylarginine into N(2)-succinylornithine, ammonia and CO(2). The polypeptide is N-succinylarginine dihydrolase (Escherichia coli O6:H1 (strain CFT073 / ATCC 700928 / UPEC)).